A 323-amino-acid chain; its full sequence is Methionyl-tRNA formyltransferase (323 aa).

A (6S)-5,6,7,8-tetrahydrofolate-binding site is contributed by 113–116 (SLLP).

The protein belongs to the Fmt family.

The catalysed reaction is L-methionyl-tRNA(fMet) + (6R)-10-formyltetrahydrofolate = N-formyl-L-methionyl-tRNA(fMet) + (6S)-5,6,7,8-tetrahydrofolate + H(+). Functionally, attaches a formyl group to the free amino group of methionyl-tRNA(fMet). The formyl group appears to play a dual role in the initiator identity of N-formylmethionyl-tRNA by promoting its recognition by IF2 and preventing the misappropriation of this tRNA by the elongation apparatus. This chain is Methionyl-tRNA formyltransferase, found in Nitrosococcus oceani (strain ATCC 19707 / BCRC 17464 / JCM 30415 / NCIMB 11848 / C-107).